Consider the following 232-residue polypeptide: Small ribosomal subunit protein uS3 (232 aa).

The region spanning 39–107 (VRQFLIKELA…PAQINIAEVR (69 aa)) is the KH type-2 domain.

It belongs to the universal ribosomal protein uS3 family. Part of the 30S ribosomal subunit. Forms a tight complex with proteins S10 and S14.

Its function is as follows. Binds the lower part of the 30S subunit head. Binds mRNA in the 70S ribosome, positioning it for translation. This Serratia proteamaculans (strain 568) protein is Small ribosomal subunit protein uS3.